The primary structure comprises 234 residues: Uridylate kinase (234 aa).

Residue Lys9–Gly12 coordinates ATP. A UMP-binding site is contributed by Gly51. Gly52 and Arg56 together coordinate ATP. UMP-binding positions include Asp71 and Cys132 to Thr139. Residues Thr159, Tyr165, and Asp168 each contribute to the ATP site.

This sequence belongs to the UMP kinase family. In terms of assembly, homohexamer.

The protein localises to the cytoplasm. It catalyses the reaction UMP + ATP = UDP + ADP. It functions in the pathway pyrimidine metabolism; CTP biosynthesis via de novo pathway; UDP from UMP (UMPK route): step 1/1. Its activity is regulated as follows. Inhibited by UTP. In terms of biological role, catalyzes the reversible phosphorylation of UMP to UDP. The chain is Uridylate kinase from Prochlorococcus marinus (strain MIT 9515).